The following is a 298-amino-acid chain: Ethanolamine ammonia-lyase small subunit (298 aa).

The interval 17 to 37 (MGQDVPQPVAPSKQEGAKPQC) is disordered. Valine 210, glutamate 231, and cysteine 261 together coordinate adenosylcob(III)alamin.

It belongs to the EutC family. In terms of assembly, the basic unit is a heterodimer which dimerizes to form tetramers. The heterotetramers trimerize; 6 large subunits form a core ring with 6 small subunits projecting outwards. Adenosylcob(III)alamin serves as cofactor.

It localises to the bacterial microcompartment. The catalysed reaction is ethanolamine = acetaldehyde + NH4(+). It functions in the pathway amine and polyamine degradation; ethanolamine degradation. Its function is as follows. Catalyzes the deamination of various vicinal amino-alcohols to oxo compounds. Allows this organism to utilize ethanolamine as the sole source of nitrogen and carbon in the presence of external vitamin B12. The sequence is that of Ethanolamine ammonia-lyase small subunit from Salmonella paratyphi A (strain ATCC 9150 / SARB42).